The following is a 68-amino-acid chain: Putative membrane protein insertion efficiency factor (68 aa).

It belongs to the UPF0161 family.

The protein resides in the cell inner membrane. Its function is as follows. Could be involved in insertion of integral membrane proteins into the membrane. In Hydrogenobaculum sp. (strain Y04AAS1), this protein is Putative membrane protein insertion efficiency factor.